A 360-amino-acid polypeptide reads, in one-letter code: MKLSTTPAQDGFYFPAEFQPVSEVWLAWPERKDNWRDDALPAQETFARIANLIAEVTKVCVAVCSHNFDRARQMLHSDVRLVEIPFNDAWMRDIGPTVLVNQAGERRGISWQFNAWGGEYNGLYDNWQQDDLVAGSVCDIIGIDYYRAPFVLEGGAIHTDGEGTLYTTEECLLSPGRNPQLSKAQIEEQLKVYLGIEKIIWLPNGLFNDETDGHVDNLMHVIAPGKVVLSWTDDPSDPQYALSRQAEQVLKSQHDAKGREIEIVRLPLPGPLHYSEREANGIDASSGMSRQAGERLSASYANFLIVNGHVFLPMLDEDTDAIAIDILQNAMPEYQIIAIPSREVLLGGGNIHCITQQIPA.

The Amidino-cysteine intermediate role is filled by Cys353.

Belongs to the agmatine deiminase family.

The catalysed reaction is agmatine + H2O = N-carbamoylputrescine + NH4(+). This chain is Putative agmatine deiminase, found in Vibrio parahaemolyticus serotype O3:K6 (strain RIMD 2210633).